Reading from the N-terminus, the 417-residue chain is Secreted aspartic protease 4 (417 aa).

Positions 1 to 18 (MFLQNILSVLAFALLIDA) are cleaved as a signal peptide. The propeptide at 19 to 75 (APVKRSTGFVTLDFNVKRSLVDPKDPTVEVKRSPLFLDIEPTEIPVDDTGRNDVGKR) is activation peptide. Residues 89 to 403 (YSADITIGSN…DLDDRKISMA (315 aa)) enclose the Peptidase A1 domain. Residue Asp107 is part of the active site. 107-109 (DTG) lines the pepstatin A pocket. Cys122 and Cys134 are disulfide-bonded. The N-linked (GlcNAc...) asparagine glycan is linked to Asn137. 160-161 (AD) lines the pepstatin A pocket. Residue Asp267 participates in Zn(2+) binding. Asp293 is an active-site residue. 293-297 (DSGTT) contributes to the pepstatin A binding site. Cys331 and Cys369 are disulfide-bonded.

It belongs to the peptidase A1 family. Monomer.

It is found in the secreted. The enzyme catalyses Preferential cleavage at the carboxyl of hydrophobic amino acids, but fails to cleave 15-Leu-|-Tyr-16, 16-Tyr-|-Leu-17 and 24-Phe-|-Phe-25 of insulin B chain. Activates trypsinogen, and degrades keratin.. Activity is inhibited by squash aspartic peptidase inhibitor (SQAPI). In terms of biological role, secreted aspartic peptidases (SAPs) are a group of ten acidic hydrolases considered as key virulence factors. These enzymes supply the fungus with nutrient amino acids as well as are able to degrade the selected host's proteins involved in the immune defense. Moreover, acts toward human hemoglobin though limited proteolysis to generate a variety of antimicrobial hemocidins, enabling to compete with the other microorganisms of the same physiological niche using the microbicidal peptides generated from the host protein. Its function is as follows. Plays a key role in defense against host by cleaving histatin-5 (Hst 5), a peptide from human saliva that carries out fungicidal activity. The cleavage rate decreases in an order of SAP2 &gt; SAP9 &gt; SAP3 &gt; SAP7 &gt; SAP4 &gt; SAP1 &gt; SAP8. The first cleavage occurs between residues 'Lys-17' and 'His-18' of Hst 5, giving DSHAKRHHGYKRKFHEK and HHSHRGY peptides. Simultaneously, the DSHAKRHHGY and KRKFHEKHHSHRGY peptides are also formed. The protein is Secreted aspartic protease 4 of Candida albicans (strain SC5314 / ATCC MYA-2876) (Yeast).